Reading from the N-terminus, the 355-residue chain is uncharacterized protein (355 aa).

This sequence belongs to the serpin family. Poxviruses subfamily.

This is an uncharacterized protein from Vertebrata (FPV).